A 372-amino-acid polypeptide reads, in one-letter code: tRNA-specific 2-thiouridylase MnmA (372 aa).

ATP is bound by residues 13–20 (GMSGGVDS) and methionine 39. The segment at 99-101 (NPD) is interaction with target base in tRNA. Cysteine 104 serves as the catalytic Nucleophile. Cysteine 104 and cysteine 200 are disulfide-bonded. Glycine 128 provides a ligand contact to ATP. The tract at residues 150 to 152 (KDQ) is interaction with tRNA. Cysteine 200 (cysteine persulfide intermediate) is an active-site residue. Residues 310 to 311 (RY) form an interaction with tRNA region.

The protein belongs to the MnmA/TRMU family.

Its subcellular location is the cytoplasm. It catalyses the reaction S-sulfanyl-L-cysteinyl-[protein] + uridine(34) in tRNA + AH2 + ATP = 2-thiouridine(34) in tRNA + L-cysteinyl-[protein] + A + AMP + diphosphate + H(+). Its function is as follows. Catalyzes the 2-thiolation of uridine at the wobble position (U34) of tRNA, leading to the formation of s(2)U34. This is tRNA-specific 2-thiouridylase MnmA from Bacillus licheniformis (strain ATCC 14580 / DSM 13 / JCM 2505 / CCUG 7422 / NBRC 12200 / NCIMB 9375 / NCTC 10341 / NRRL NRS-1264 / Gibson 46).